The chain runs to 640 residues: Probable threonine--tRNA ligase, cytoplasmic (640 aa).

Residues 1 to 63 (MYEVKLKVEL…LKDCKLELMT (63 aa)) form the TGS domain.

The protein belongs to the class-II aminoacyl-tRNA synthetase family.

It localises to the cytoplasm. The catalysed reaction is tRNA(Thr) + L-threonine + ATP = L-threonyl-tRNA(Thr) + AMP + diphosphate + H(+). The polypeptide is Probable threonine--tRNA ligase, cytoplasmic (Encephalitozoon cuniculi (strain GB-M1) (Microsporidian parasite)).